Here is a 404-residue protein sequence, read N- to C-terminus: Cysteine desulfurase IscS (404 aa).

Pyridoxal 5'-phosphate contacts are provided by residues 75 to 76 (AT), asparagine 155, glutamine 183, and 203 to 205 (SGH). Lysine 206 carries the post-translational modification N6-(pyridoxal phosphate)lysine. Threonine 243 is a binding site for pyridoxal 5'-phosphate. The active-site Cysteine persulfide intermediate is cysteine 328. Cysteine 328 provides a ligand contact to [2Fe-2S] cluster.

This sequence belongs to the class-V pyridoxal-phosphate-dependent aminotransferase family. NifS/IscS subfamily. In terms of assembly, homodimer. Forms a heterotetramer with IscU, interacts with other sulfur acceptors. It depends on pyridoxal 5'-phosphate as a cofactor.

The protein resides in the cytoplasm. The enzyme catalyses (sulfur carrier)-H + L-cysteine = (sulfur carrier)-SH + L-alanine. It functions in the pathway cofactor biosynthesis; iron-sulfur cluster biosynthesis. Master enzyme that delivers sulfur to a number of partners involved in Fe-S cluster assembly, tRNA modification or cofactor biosynthesis. Catalyzes the removal of elemental sulfur and selenium atoms from cysteine and selenocysteine to produce alanine. Functions as a sulfur delivery protein for Fe-S cluster synthesis onto IscU, an Fe-S scaffold assembly protein, as well as other S acceptor proteins. Also functions as a selenium delivery protein in the pathway for the biosynthesis of selenophosphate. The protein is Cysteine desulfurase IscS of Salmonella arizonae (strain ATCC BAA-731 / CDC346-86 / RSK2980).